Reading from the N-terminus, the 4555-residue chain is Protocadherin Fat 3 (4555 aa).

A signal peptide spans 1–31 (MGVTMRHCIDTRPPSCLIFLLLKLCATVSQG). Topologically, residues 32–4153 (LPGTGPLGFH…AGHSYVGKEE (4122 aa)) are extracellular. 33 Cadherin domains span residues 43 to 157 (THAL…RPLF), 158 to 265 (SPTT…APII), 263 to 374 (PIIH…TPIK), 376 to 471 (EKDV…TPEF), 472 to 577 (QETL…SPLF), 578 to 680 (EKVA…SKSF), 726 to 830 (KSFP…SPVF), 831 to 935 (LQDS…SPAF), 936 to 1042 (IPSS…TPYF), 1043 to 1147 (PDFA…APLT), 1148 to 1253 (SEPI…KPQF), 1254 to 1358 (PEKV…SPIP), 1362 to 1459 (DEPF…GPEF), 1460 to 1565 (SQPH…SPYF), 1566 to 1768 (TNPL…PPVF), 1769 to 1882 (LFSQ…PPVF), 1883 to 1985 (TQAV…TQSF), 1982 to 2083 (TQSF…SPVF), 2084 to 2185 (VGLP…MPVF), 2186 to 2286 (DKPF…PPVF), 2287 to 2393 (DQPT…PPVF), 2394 to 2495 (NQLI…SPAF), 2496 to 2599 (SQST…APQF), 2600 to 2707 (MTLE…LPSF), 2708 to 2813 (TQSQ…KPVF), 2814 to 2923 (ETSS…APVF), 2924 to 3028 (AHEV…SPVC), 3029 to 3130 (DQVA…PPVF), 3131 to 3235 (SSNH…PPVF), 3236 to 3340 (ERRD…PPRF), 3341 to 3445 (SQDV…SPVF), 3446 to 3550 (TPAN…KPTA), and 3551 to 3652 (IPLE…TIRF). N-linked (GlcNAc...) asparagine glycosylation is present at asparagine 48. The N-linked (GlcNAc...) asparagine glycan is linked to asparagine 341. N-linked (GlcNAc...) asparagine glycans are attached at residues asparagine 481, asparagine 562, asparagine 667, asparagine 799, asparagine 879, asparagine 898, and asparagine 1006. N-linked (GlcNAc...) asparagine glycosylation is found at asparagine 1367 and asparagine 1429. Asparagine 1751 carries N-linked (GlcNAc...) asparagine glycosylation. 3 N-linked (GlcNAc...) asparagine glycosylation sites follow: asparagine 1944, asparagine 1993, and asparagine 1996. Residues asparagine 2208, asparagine 2292, asparagine 2331, and asparagine 2467 are each glycosylated (N-linked (GlcNAc...) asparagine). N-linked (GlcNAc...) asparagine glycosylation occurs at asparagine 2734. Residue asparagine 3000 is glycosylated (N-linked (GlcNAc...) asparagine). A glycan (N-linked (GlcNAc...) asparagine) is linked at asparagine 3201. Asparagine 3449, asparagine 3618, and asparagine 3741 each carry an N-linked (GlcNAc...) asparagine glycan. One can recognise an EGF-like 1 domain in the interval 3794 to 3832 (SNDPCVEKPCPEDMQCVGYEASRRPFLCQCPPGKLGECS). Intrachain disulfides connect cysteine 3798–cysteine 3809, cysteine 3803–cysteine 3821, and cysteine 3823–cysteine 3831. Residues 3834-4017 (HTSLSFAGNS…VGLTELKLGC (184 aa)) form the Laminin G-like domain. The N-linked (GlcNAc...) asparagine glycan is linked to asparagine 3926. Intrachain disulfides connect cysteine 3984/cysteine 4017, cysteine 4024/cysteine 4035, cysteine 4029/cysteine 4045, cysteine 4047/cysteine 4056, cysteine 4063/cysteine 4074, cysteine 4068/cysteine 4083, cysteine 4085/cysteine 4094, cysteine 4101/cysteine 4112, cysteine 4106/cysteine 4121, and cysteine 4123/cysteine 4132. 2 EGF-like domains span residues 4020–4057 (YPDACQRSPCLHGGSCSGLPSGGYQCSCLSQFTGTNCE) and 4059–4095 (EITACFPNPCRNGGSCDPIGNTFICSCKAGLTGVTCE). The 37-residue stretch at 4097 to 4133 (DVDECEREECENGGSCVNLFGSFFCNCTPGYVGQYCG) folds into the EGF-like 4; calcium-binding domain. The chain crosses the membrane as a helical span at residues 4154 to 4174 (LIGIAVVLFVIFTLIVLFIVF). Residues 4175–4555 (RKKVFRKNYS…FVETQHQTQV (381 aa)) are Cytoplasmic-facing. Residues 4326–4343 (SNKGSNSEVQSLNSFQSD) are compositionally biased toward polar residues. Disordered stretches follow at residues 4326-4347 (SNKGSNSEVQSLNSFQSDSGDD), 4395-4424 (GGYDIDSEYPPPHEEEFLSQDQLPPPLPED), and 4452-4472 (PRFHPSQYLPPHPLPGETDLG). Omega-N-methylarginine occurs at positions 4508 and 4518.

Restricted to the nervous system. Abundantly expressed in the fetal brain.

It is found in the membrane. Functionally, may play a role in the interactions between neurites derived from specific subsets of neurons during development. This is Protocadherin Fat 3 (Fat3) from Rattus norvegicus (Rat).